The chain runs to 230 residues: Tol-Pal system protein TolQ (230 aa).

Helical transmembrane passes span 16 to 36 (LVKL…AIII), 139 to 159 (YIGL…LGAV), and 171 to 191 (IAEA…AVMA).

This sequence belongs to the ExbB/TolQ family. In terms of assembly, the Tol-Pal system is composed of five core proteins: the inner membrane proteins TolA, TolQ and TolR, the periplasmic protein TolB and the outer membrane protein Pal. They form a network linking the inner and outer membranes and the peptidoglycan layer.

The protein resides in the cell inner membrane. In terms of biological role, part of the Tol-Pal system, which plays a role in outer membrane invagination during cell division and is important for maintaining outer membrane integrity. Required, with TolR, for the proton motive force-dependent activation of TolA and for TolA-Pal interaction. This is Tol-Pal system protein TolQ from Escherichia coli O157:H7.